Reading from the N-terminus, the 334-residue chain is MARKDVASMFAAALFIGAFAAVPTSVQSIGVCYGVIGNNLPSRSDVVQLYRSKGINGMRIYFADGQALSALRNSGIGLILDIGNDQLANIAASTSNAASWVQNNVRPYYPAVNIKYIAAGNEVQGGATQSILPAMRNLNAALSAAGLGAIKVSTSIRFDEVANSFPPSAGVFKNAYMTDVARLLASTGAPLLANVYPYFAYRDNPGSISLNYATFQPGTTVRDQNNGLTYTSLFDAMVDAVYAALEKAGAPAVKVVVSESGWPSAGGFAASAGNARTYNQGLINHVGGGTPKKREALETYIFAMFNENQKTGDATERSFGLFNPDKSPAYNIQF.

Positions 1–28 (MARKDVASMFAAALFIGAFAAVPTSVQS) are cleaved as a signal peptide. E122 serves as the catalytic Proton donor. E259 acts as the Nucleophile in catalysis.

Belongs to the glycosyl hydrolase 17 family.

The catalysed reaction is Hydrolysis of (1-&gt;3)-beta-D-glucosidic linkages in (1-&gt;3)-beta-D-glucans.. May provide a degree of protection against microbial invasion of germinated barley grain through its ability to degrade fungal cell wall polysaccharides. Hydrolyzes laminarin in vitro. The protein is Glucan endo-1,3-beta-glucosidase GII of Hordeum vulgare (Barley).